Consider the following 562-residue polypeptide: Adenylate kinase isoenzyme 5 (562 aa).

Adenylate kinase stretches follow at residues 133 to 316 (KIIL…VAVD) and 377 to 559 (KIIF…TAID). Residue 142–147 (GSGKGT) participates in ATP binding. Residues 162–193 (SVGELLRKKIHSASSNRKWSLIAKIITNGELA) are NMP 1. Residues Arg168, 191–193 (ELA), 219–222 (GFPR), and Gln226 each bind AMP. Positions 256 to 266 (KRAEQQGRPDD) are LID 1. Position 257 (Arg257) interacts with ATP. Residues Arg263 and Arg274 each coordinate AMP. Position 386–391 (386–391 (GSGKGT)) interacts with ATP. The NMP 2 stretch occupies residues 406–435 (STGELLRQELTSESERSKLIRDIMERGDLV). AMP is bound by residues Thr407, Arg412, 433–435 (DLV), 462–465 (GYPR), and Gln469. The segment at 499–509 (QRSQSSQRGED) is LID 2. Arg500 provides a ligand contact to ATP. AMP is bound by residues Arg506 and Arg517. Position 545 (Gly545) interacts with ATP.

Belongs to the adenylate kinase family. In terms of assembly, monomer. Interacts with YWHAZ. Brain specific.

It is found in the cytoplasm. It carries out the reaction AMP + ATP = 2 ADP. It catalyses the reaction a 2'-deoxyribonucleoside 5'-diphosphate + ATP = a 2'-deoxyribonucleoside 5'-triphosphate + ADP. The enzyme catalyses a ribonucleoside 5'-diphosphate + ATP = a ribonucleoside 5'-triphosphate + ADP. Nucleoside monophosphate (NMP) kinase that catalyzes the reversible transfer of the terminal phosphate group between nucleoside triphosphates and monophosphates. Active on AMP and dAMP with ATP as a donor. When GTP is used as phosphate donor, the enzyme phosphorylates AMP, CMP, and to a small extent dCMP. Also displays broad nucleoside diphosphate kinase activity. The polypeptide is Adenylate kinase isoenzyme 5 (Ak5) (Mus musculus (Mouse)).